A 187-amino-acid polypeptide reads, in one-letter code: Casparian strip membrane protein 1 (187 aa).

The segment covering 1–10 has biased composition (basic and acidic residues); the sequence is MKGSSEHGET. Positions 1–20 are disordered; it reads MKGSSEHGETSKQAPLGSSR. Residues 1 to 27 lie on the Cytoplasmic side of the membrane; it reads MKGSSEHGETSKQAPLGSSRGVSKGVS. A helical transmembrane segment spans residues 28–48; it reads VLDLILRFIAIIGTLASAIAM. Residues 49 to 75 lie on the Extracellular side of the membrane; sequence GTTNETLPFFTQFIRFKAQYSDLPTLT. Asn-52 is a glycosylation site (N-linked (GlcNAc...) asparagine). The helical transmembrane segment at 76 to 96 threads the bilayer; sequence FFVVANSIVCAYLTLSLPLSI. At 97–115 the chain is on the cytoplasmic side; that stretch reads VHIIRSRAKYSRLLLVVLD. Residues 116 to 136 traverse the membrane as a helical segment; the sequence is AAMLALVTPGASAAAAIVYLA. Topologically, residues 137-162 are extracellular; it reads HKGNVRANWLAICQQFDSFCERISGC. Residues 163 to 183 form a helical membrane-spanning segment; it reads LIGSFGAMVMLVLLLLLSAIA. Over 184–187 the chain is Cytoplasmic; sequence LARR.

This sequence belongs to the Casparian strip membrane proteins (CASP) family. As to quaternary structure, homodimer and heterodimers.

The protein localises to the cell membrane. Regulates membrane-cell wall junctions and localized cell wall deposition. Required for establishment of the Casparian strip membrane domain (CSD) and the subsequent formation of Casparian strips, a cell wall modification of the root endodermis that determines an apoplastic barrier between the intraorganismal apoplasm and the extraorganismal apoplasm and prevents lateral diffusion. The protein is Casparian strip membrane protein 1 of Zea mays (Maize).